A 156-amino-acid chain; its full sequence is MTQSQYSQTPRLALTDAIIDAKARKNLTFEDIAQGTGLSLAFVTAALLGQHPLPADAARVVVDRLELEEDAFFLLQTIPVRGSIPGGIPTDPTIYRFYEMVQVYGSTLKALVHEQFGDGIISAIDFKLDIKKVDDPNGGSRAVITLDGKYLPTKPF.

Active-site residues include Arg-96, Glu-99, and Ser-122.

The protein belongs to the cyanase family.

The catalysed reaction is cyanate + hydrogencarbonate + 3 H(+) = NH4(+) + 2 CO2. Functionally, catalyzes the reaction of cyanate with bicarbonate to produce ammonia and carbon dioxide. The chain is Cyanate hydratase from Photorhabdus laumondii subsp. laumondii (strain DSM 15139 / CIP 105565 / TT01) (Photorhabdus luminescens subsp. laumondii).